The sequence spans 482 residues: Malvidin galactosylase UGT88C3 (482 aa).

Histidine 16 serves as the catalytic Proton acceptor. Catalysis depends on aspartate 117, which acts as the Charge relay. UDP is bound by residues serine 279, tryptophan 345, alanine 349, histidine 366, asparagine 370, serine 371, and glutamate 374.

This sequence belongs to the UDP-glycosyltransferase family. As to expression, highly expressed in leaves, sheaths, pistils and embryos, observed in stems, stem nodes and panicles, and present at low levels in roots.

It localises to the endoplasmic reticulum. Its subcellular location is the nucleus. It catalyses the reaction malvidin + UDP-alpha-D-galactose = malvidin 3-O-beta-D-galactoside + UDP + H(+). It participates in pigment biosynthesis; anthocyanin biosynthesis. UDP-glycosyltransferase which uses UDP-galactose and malvidin as substrates to catalyze the biosynthesis of malvidin 3-O-galactoside, an anthocyanin conferring purple pigmentation. The chain is Malvidin galactosylase UGT88C3 from Oryza sativa subsp. japonica (Rice).